Consider the following 170-residue polypeptide: Cyclic pyranopterin monophosphate synthase (170 aa).

Substrate contacts are provided by residues 89–91 (LCH) and 125–126 (ME). D140 is a catalytic residue.

This sequence belongs to the MoaC family. As to quaternary structure, homohexamer; trimer of dimers.

It catalyses the reaction (8S)-3',8-cyclo-7,8-dihydroguanosine 5'-triphosphate = cyclic pyranopterin phosphate + diphosphate. Its pathway is cofactor biosynthesis; molybdopterin biosynthesis. Its function is as follows. Catalyzes the conversion of (8S)-3',8-cyclo-7,8-dihydroguanosine 5'-triphosphate to cyclic pyranopterin monophosphate (cPMP). This is Cyclic pyranopterin monophosphate synthase from Streptomyces coelicolor (strain ATCC BAA-471 / A3(2) / M145).